Reading from the N-terminus, the 252-residue chain is uncharacterized protein (252 aa).

10 consecutive repeat copies span residues Thr-68 to Asp-82, Thr-83 to Asp-97, Thr-98 to Asp-112, Thr-113 to Asp-127, Thr-128 to Asp-142, Thr-143 to Asp-157, Thr-158 to Asp-172, Thr-173 to Asp-187, Thr-188 to Asp-202, and Thr-203 to Asp-217. Positions Thr-68 to Asn-246 are 13 X 15 AA tandem repeats. The stretch at Thr-218–Leu-230 is one 11; truncated repeat. A 12; truncated repeat occupies Asn-231 to Asp-239. One copy of the 13; truncated repeat lies at Thr-240 to Asn-246.

Functionally, a protein probably derived from this gene is found in cuboidal crystalline inclusions, but is not toxic even when coexpressed with upstream ORF1. The protein runs anomalously as a 50 kDa band in gels. This is an uncharacterized protein from Bacillus thuringiensis subsp. kurstaki.